A 193-amino-acid chain; its full sequence is Acyl carrier protein phosphodiesterase (193 aa).

It belongs to the AcpH family.

It catalyses the reaction holo-[ACP] + H2O = apo-[ACP] + (R)-4'-phosphopantetheine + H(+). In terms of biological role, converts holo-ACP to apo-ACP by hydrolytic cleavage of the phosphopantetheine prosthetic group from ACP. The polypeptide is Acyl carrier protein phosphodiesterase (Shigella boydii serotype 18 (strain CDC 3083-94 / BS512)).